Consider the following 361-residue polypeptide: Probable pectinesterase 49 (361 aa).

Residues 1-22 (MGYISLALVALLVFFASPVVLA) form the signal peptide. Asn-128 carries N-linked (GlcNAc...) asparagine glycosylation. Residue Gln-174 participates in substrate binding. The active-site Proton donor is Asp-197. Asp-218 acts as the Nucleophile in catalysis. The substrate site is built by Arg-275 and Trp-277.

This sequence belongs to the pectinesterase family. As to expression, expressed in flower buds.

Its subcellular location is the secreted. It is found in the cell wall. It carries out the reaction [(1-&gt;4)-alpha-D-galacturonosyl methyl ester](n) + n H2O = [(1-&gt;4)-alpha-D-galacturonosyl](n) + n methanol + n H(+). It functions in the pathway glycan metabolism; pectin degradation; 2-dehydro-3-deoxy-D-gluconate from pectin: step 1/5. In terms of biological role, acts in the modification of cell walls via demethylesterification of cell wall pectin. The chain is Probable pectinesterase 49 (PME49) from Arabidopsis thaliana (Mouse-ear cress).